A 770-amino-acid chain; its full sequence is Metallothionein expression activator (770 aa).

Positions 77–97 are disordered; it reads LVPSPKTGDGSSDKKNIDRTW. 5 positions are modified to phosphoserine: S80, S122, S247, S249, and S253. T259 is subject to Phosphothreonine. The interval 286 to 323 is disordered; it reads PPPTLISPRMSNTSINGSPSRKYHRQRYPNKSPESNGL. Polar residues predominate over residues 294–304; the sequence is RMSNTSINGSP. Residues S385, S392, and S483 each carry the phosphoserine modification. Phosphothreonine is present on residues T486 and T501. At S564 the chain carries Phosphoserine. 2 C2H2-type zinc fingers span residues 603–627 and 633–657; these read FECLYPNCNKVFKRRYNIRSHIQTH and YSCDFPGCTKAFVRNHDLIRHKISH. Residues 662 to 685 form a C2H2-type 3; atypical zinc finger; that stretch reads YICPCGKRFNREDALMVHRSRMIC. The segment at 699–770 is disordered; sequence LTSPKKSLLD…RTLSNETDAL (72 aa). Basic and acidic residues predominate over residues 705 to 745; it reads SLLDSPHDTSPVKETIARDKDGSVLMKMEEQLRDDMRKHGL. 2 positions are modified to phosphoserine: S709 and S714. Polar residues predominate over residues 754–770; it reads AHEQNSNRTLSNETDAL.

The protein localises to the nucleus. Functionally, plays a role in regulating basal-level expression of CUP1. Activates EGT2 transcription in the absence of SWI5. The chain is Metallothionein expression activator (ACE2) from Saccharomyces cerevisiae (strain ATCC 204508 / S288c) (Baker's yeast).